A 96-amino-acid polypeptide reads, in one-letter code: Protein YddL (96 aa).

Residues 1–21 (MKLKIVAVVVTGLLAANVAHA) form the signal peptide.

This chain is Protein YddL (yddL), found in Escherichia coli (strain K12).